A 197-amino-acid chain; its full sequence is Probable GTP-binding protein EngB (197 aa).

One can recognise an EngB-type G domain in the interval 22-195 (GFPEIGLAGR…WQWIEAHTVG (174 aa)). Residues 30–37 (GRSNVGKS), 57–61 (GKTQT), 75–78 (DVPG), 142–145 (TKSD), and 174–176 (FSA) contribute to the GTP site. The Mg(2+) site is built by Ser37 and Thr59.

It belongs to the TRAFAC class TrmE-Era-EngA-EngB-Septin-like GTPase superfamily. EngB GTPase family. Requires Mg(2+) as cofactor.

Its function is as follows. Necessary for normal cell division and for the maintenance of normal septation. This chain is Probable GTP-binding protein EngB, found in Lactiplantibacillus plantarum (strain ATCC BAA-793 / NCIMB 8826 / WCFS1) (Lactobacillus plantarum).